The sequence spans 312 residues: GDSL esterase/lipase At2g38180 (312 aa).

An N-terminal signal peptide occupies residues 1-22; it reads MVGPVRPQIVLFGSSIVQYSFT. The N-linked (GlcNAc...) asparagine glycan is linked to asparagine 79. A disordered region spans residues 285–312; it reads EPPHPVSLCDHELTQNEQLEPPQPTARL.

It belongs to the 'GDSL' lipolytic enzyme family.

Its subcellular location is the secreted. The protein is GDSL esterase/lipase At2g38180 of Arabidopsis thaliana (Mouse-ear cress).